Reading from the N-terminus, the 222-residue chain is GMP/IMP nucleotidase YrfG (222 aa).

Residue aspartate 9 is the Nucleophile of the active site. Mg(2+) is bound by residues aspartate 9 and aspartate 11. Substrate contacts are provided by residues aspartate 9 to aspartate 11 and lysine 149. Aspartate 174 lines the Mg(2+) pocket.

Belongs to the HAD-like hydrolase superfamily. Mg(2+) is required as a cofactor. Requires Mn(2+) as cofactor. Co(2+) serves as cofactor. It depends on Zn(2+) as a cofactor.

The enzyme catalyses a ribonucleoside 5'-phosphate + H2O = a ribonucleoside + phosphate. In terms of biological role, catalyzes the dephosphorylation of different purine nucleotides (GMP and IMP). Also hydrolyzes flavin mononucleotide (FMN). This Escherichia coli (strain K12) protein is GMP/IMP nucleotidase YrfG (yrfG).